The primary structure comprises 397 residues: Gamma tubulin complex adapter mto2 (397 aa).

The segment covering 1–13 (MSEHNYQSDREVA) has biased composition (basic and acidic residues). 3 disordered regions span residues 1–44 (MSEH…WRAG), 269–298 (YTSSVDSSPQRMASDSYGRPSLHLNDPFPS), and 346–397 (RSDP…TPSP). Composition is skewed to polar residues over residues 22–37 (ASANQLSSNSRESTPR), 269–281 (YTSSVDSSPQRMA), 352–369 (RHVSNSTNKSSLHPSPTS), and 382–397 (SPASQSFPSLQDTPSP). 2 positions are modified to phosphoserine: S366 and S396.

As to quaternary structure, interacts with mto1; the interaction is direct and required for efficient binding to the gamma-tubulin complex. Interacts with gamma tubulin complex subunits alp4, alp6 and gtb1.

Its subcellular location is the cytoplasm. The protein resides in the cytoskeleton. It is found in the microtubule organizing center. The protein localises to the spindle pole body. Acts together with mto1 to promote nucleation of at least a subset of cytoplasmic microtubules, by recruiting the gamma-tubulin complex to the interphase microtubule organizing center (iMTOC) and to the equatorial MTOC (eMTOC) during anaphase. Does not appear to be required for cytoplasmic astral microtubule nucleation from the spindle pole body (SPB). Required to establish the eMTOC, and thereby to tether the cytokinetic actin ring. This is Gamma tubulin complex adapter mto2 from Schizosaccharomyces pombe (strain 972 / ATCC 24843) (Fission yeast).